The chain runs to 372 residues: Prostaglandin E synthase 2 (372 aa).

Residues 1-54 (MAHAVRALWPHGRALAWRLGDRPALGLHAQSRAGFTGAAGGSGPAATARKGGPR) are Lumenal-facing. Residues 55-71 (LLGAAALALGGALGLYH) form a helical membrane-spanning segment. Topologically, residues 72 to 372 (TARWHLRAQD…VEKAIAEAPQ (301 aa)) are cytoplasmic. The Glutaredoxin domain occupies 87 to 190 (SATQLSLSSR…DIITYYPPMK (104 aa)). Ser92 carries the post-translational modification Phosphoserine. Glutathione-binding positions include Val145 and 161-162 (DS). Residues 259–372 (DYIVKEGNFG…VEKAIAEAPQ (114 aa)) form the GST C-terminal domain.

Belongs to the GST superfamily. As to quaternary structure, may interact with CEBPB. Interacts with EXOSC10. Homodimer. Post-translationally, synthesized as a Golgi membrane-associated protein, and the proteolytic removal of the N-terminal hydrophobic domain leads to the formation of a mature cytosolic enzyme. As to expression, detected in heart (at protein level). Widely expressed. Expressed in heart &gt; kidney &gt; muscle &gt; testis &gt; endometrium = ovary &gt; myometrium = spleen = lung. In endometrium, it is mainly expressed in luminal epithelial cells followed by glandular epithelial cells, but expression is also present in stromal cells at a lower level.

The protein localises to the microsome membrane. Its subcellular location is the cytoplasm. The enzyme catalyses prostaglandin H2 = prostaglandin E2. It catalyses the reaction prostaglandin H2 = (12S)-hydroxy-(5Z,8E,10E)-heptadecatrienoate + malonaldehyde. Its pathway is lipid metabolism; prostaglandin biosynthesis. Isomerase activity is increased by sulfhydril compounds. Dithiothreitol (DTT) is most effective, followed by glutathione (GSH) and 2-mercaptoethanol. In terms of biological role, isomerase that catalyzes the conversion of PGH2 into the more stable prostaglandin E2 (PGE2) (in vitro). The biological function and the GSH-dependent property of PTGES2 is still under debate. In vivo, PTGES2 could form a complex with GSH and heme and would not participate in PGE2 synthesis but would catalyze the degradation of prostaglandin E2 H2 (PGH2) to 12(S)-hydroxy-5(Z),8(E),10(E)-heptadecatrienoic acid (HHT) and malondialdehyde (MDA). This Bos taurus (Bovine) protein is Prostaglandin E synthase 2 (PTGES2).